The following is a 308-amino-acid chain: MSVGVAVLGSGNIGTDLMIKVLRLSDSLRMVAMAGIDPDSDGLARARRLGVTTTAEGVAGLVALPEFADVALVFDATSAGAHRHHDAVLRAHGRTVVDLTPAAVGPYVVPPVNLDEHLRETNVNMVTCGGQATVPIVAAVGRVTPVTYGEIVASIAAKSAGPGTRANIDEFTETTARAIEVVGGAELGKAIIVLNPADPPLLMRDTVYCLCPDTDADRSAIAAAIADMVRAVQEYVPGYCLKQDVQFDRVDSYLPALGRRLTGLQVSTFLEVSGAGHYLPTYAGNLDIMTSAALRTAERLIARRAVTA.

10-13 (SGNI) is an NAD(+) binding site. Cys-128 (acyl-thioester intermediate) is an active-site residue. NAD(+)-binding positions include 159 to 167 (SAGPGTRAN) and Asn-285.

The protein belongs to the acetaldehyde dehydrogenase family.

It carries out the reaction acetaldehyde + NAD(+) + CoA = acetyl-CoA + NADH + H(+). The protein is Acetaldehyde dehydrogenase of Salinispora tropica (strain ATCC BAA-916 / DSM 44818 / JCM 13857 / NBRC 105044 / CNB-440).